The following is a 360-amino-acid chain: Glycerol-1-phosphate dehydrogenase [NAD(P)+] (360 aa).

Residues 108-112 and 130-133 each bind NAD(+); these read GRVID and TAAS. Position 135 (Asp-135) interacts with substrate. Residue Ser-139 participates in NAD(+) binding. Substrate is bound at residue Asp-182. Zn(2+) is bound by residues Asp-182 and His-262. His-266 contacts substrate. His-278 provides a ligand contact to Zn(2+).

It belongs to the glycerol-1-phosphate dehydrogenase family. It depends on Zn(2+) as a cofactor.

It localises to the cytoplasm. The enzyme catalyses sn-glycerol 1-phosphate + NAD(+) = dihydroxyacetone phosphate + NADH + H(+). The catalysed reaction is sn-glycerol 1-phosphate + NADP(+) = dihydroxyacetone phosphate + NADPH + H(+). It participates in membrane lipid metabolism; glycerophospholipid metabolism. Functionally, catalyzes the NAD(P)H-dependent reduction of dihydroxyacetonephosphate (DHAP or glycerone phosphate) to glycerol 1-phosphate (G1P). The G1P thus generated is used as the glycerophosphate backbone of phospholipids in the cellular membranes of Archaea. The sequence is that of Glycerol-1-phosphate dehydrogenase [NAD(P)+] from Methanocorpusculum labreanum (strain ATCC 43576 / DSM 4855 / Z).